The following is a 216-amino-acid chain: MAGYRVEDDYDYLFKVVLIGDSGVGKSNLLSRFTKNEFNLESKSTIGVEFATRTLKVDGKVVKAQIWDTAGQERYRAITSAYYRGAVGALLVYDVTRRATFENVDRWLKELKNHTDPNIVVMLVGNKSDLRHLLAVPTEDGKSYAEQESLCFMETSALEATNVEDAFAEVLTQIYRITSKKQVEAGEDGNASVPKGEKIEVKNDVSALKKLGCCSN.

20–27 serves as a coordination point for GTP; sequence GDSGVGKS. Residues 42 to 50 carry the Effector region motif; that stretch reads SKSTIGVEF. GTP contacts are provided by residues 68–72, 126–129, and 156–157; these read DTAGQ, NKSD, and SA. 2 S-geranylgeranyl cysteine lipidation sites follow: Cys-213 and Cys-214.

This sequence belongs to the small GTPase superfamily. Rab family.

It is found in the cell membrane. In terms of biological role, intracellular vesicle trafficking and protein transport. In Arabidopsis thaliana (Mouse-ear cress), this protein is Ras-related protein RABA1b (RABA1B).